The following is a 901-amino-acid chain: Protein translocase subunit SecA (901 aa).

ATP-binding positions include glutamine 87, 105–109 (GEGKT), and aspartate 512. Positions 859-901 (HQDDDSAAAAALAAQTGERKVGRNDPCPCGSGKKYKQCHGRLQ) are disordered. The Zn(2+) site is built by cysteine 885, cysteine 887, cysteine 896, and histidine 897. Residues 891-901 (KKYKQCHGRLQ) show a composition bias toward basic residues.

This sequence belongs to the SecA family. In terms of assembly, monomer and homodimer. Part of the essential Sec protein translocation apparatus which comprises SecA, SecYEG and auxiliary proteins SecDF-YajC and YidC. Zn(2+) serves as cofactor.

The protein localises to the cell inner membrane. It is found in the cytoplasm. It catalyses the reaction ATP + H2O + cellular proteinSide 1 = ADP + phosphate + cellular proteinSide 2.. Its function is as follows. Part of the Sec protein translocase complex. Interacts with the SecYEG preprotein conducting channel. Has a central role in coupling the hydrolysis of ATP to the transfer of proteins into and across the cell membrane, serving both as a receptor for the preprotein-SecB complex and as an ATP-driven molecular motor driving the stepwise translocation of polypeptide chains across the membrane. The polypeptide is Protein translocase subunit SecA (Escherichia coli O6:K15:H31 (strain 536 / UPEC)).